The sequence spans 80 residues: Large ribosomal subunit protein bL31B (80 aa).

It belongs to the bacterial ribosomal protein bL31 family. Type B subfamily. As to quaternary structure, part of the 50S ribosomal subunit.

The polypeptide is Large ribosomal subunit protein bL31B (Methylobacillus flagellatus (strain ATCC 51484 / DSM 6875 / VKM B-1610 / KT)).